The primary structure comprises 76 residues: uncharacterized protein (76 aa).

Positions 1–20 (MKNAVLVFLLLSVFALSVNA) are cleaved as a signal peptide.

Prismatic layer of shell (at protein level). Expressed primarily in the mantle with equal levels in the mantle edge and the mantle pallium.

The protein resides in the secreted. This is an uncharacterized protein from Margaritifera margaritifera (Freshwater pearl mussel).